The primary structure comprises 1220 residues: Protein patched homolog 1 (1220 aa).

The disordered stretch occupies residues 1–27; sequence MASDPRDPGPAGGVFGDLPPSYTRSPP. Residues 1-84 lie on the Cytoplasmic side of the membrane; that stretch reads MASDPRDPGP…GCHIQRHCGK (84 aa). The helical transmembrane segment at 85–105 threads the bilayer; that stretch reads VLFIGLLVFGALSVGLRVAAI. Topologically, residues 106–419 are extracellular; that stretch reads ETDIEKLWVE…LNDIMKSFSD (314 aa). N397 carries N-linked (GlcNAc...) asparagine glycosylation. Residues 420 to 440 traverse the membrane as a helical segment; that stretch reads VSVIRVAGGYLLMLAYACVTM. The region spanning 421–579 is the SSD domain; it reads SVIRVAGGYL…LLIFPAILSL (159 aa). At 441 to 449 the chain is on the cytoplasmic side; that stretch reads LRWDCAKSQ. The helical transmembrane segment at 450–470 threads the bilayer; sequence GAVGLAGVLLVALSVAAGLGL. Residues 471 to 484 lie on the Extracellular side of the membrane; that stretch reads CSLLGLSFNAATTQ. Residues 485 to 505 traverse the membrane as a helical segment; the sequence is VLPSLALGIGVDDMFLLGHSF. Residues 506–528 are Cytoplasmic-facing; it reads TETRSNIPFKERTGDCLRRTGTS. A helical membrane pass occupies residues 529–549; that stretch reads VALTSVNNMIAFFMAALVPIP. At 550-558 the chain is on the extracellular side; sequence ALRAFSLQA. Residues 559 to 579 form a helical membrane-spanning segment; it reads AVVVVFNFAMALLIFPAILSL. Over 580–739 the chain is Cytoplasmic; it reads DLHRREDKRL…APLLLKPETK (160 aa). A helical membrane pass occupies residues 740-760; that stretch reads TVVVVVFVALLSLSLYGTTMV. The Extracellular portion of the chain corresponds to 761-1016; it reads HDGLYLTDIV…WEQYIGLRHW (256 aa). N865 and N888 each carry an N-linked (GlcNAc...) asparagine glycan. The helical transmembrane segment at 1017 to 1037 threads the bilayer; sequence FLLSISVVLACTFLVCAILLL. The Cytoplasmic portion of the chain corresponds to 1038 to 1044; it reads NPWTAGV. Residues 1045-1065 traverse the membrane as a helical segment; sequence IVFILPMMTVELFGIMGLIGI. Residues 1066-1072 are Extracellular-facing; the sequence is KLSAIPV. Residues 1073–1093 traverse the membrane as a helical segment; the sequence is VILIASVGIGVEFTVHIALGF. Residues 1094–1110 are Cytoplasmic-facing; that stretch reads LTAIGDRNTRSAVAMEH. A helical transmembrane segment spans residues 1111–1131; that stretch reads MFAPVIDGAISTLLGVLMLAG. The Extracellular portion of the chain corresponds to 1132–1143; that stretch reads SEFDFIMRYFFA. The chain crosses the membrane as a helical span at residues 1144 to 1164; it reads VLAILTLLGILNGLVLLPVLL. At 1165 to 1220 the chain is on the cytoplasmic side; sequence SLMGPPAEVVPANNANHLQSPSPEPMPPPMNHHGYYAGHIPKASHQAFSETSDSEY.

This sequence belongs to the patched family. In terms of processing, glycosylation is necessary for SHH binding. As to expression, detected in embryonic presomitic mesoderm, neuroectoderm, tissue surrounding the notochord, ventral neural tube.

It is found in the membrane. Its function is as follows. Acts as a receptor for sonic hedgehog (SHH), indian hedgehog (IHH) and desert hedgehog (DHH). Associates with the smoothened protein (SMO) to transduce the hedgehog's proteins signal. This Danio rerio (Zebrafish) protein is Protein patched homolog 1 (ptch1).